The primary structure comprises 252 residues: 2-succinyl-6-hydroxy-2,4-cyclohexadiene-1-carboxylate synthase (252 aa).

It belongs to the AB hydrolase superfamily. MenH family. Monomer.

It carries out the reaction 5-enolpyruvoyl-6-hydroxy-2-succinyl-cyclohex-3-ene-1-carboxylate = (1R,6R)-6-hydroxy-2-succinyl-cyclohexa-2,4-diene-1-carboxylate + pyruvate. It participates in quinol/quinone metabolism; 1,4-dihydroxy-2-naphthoate biosynthesis; 1,4-dihydroxy-2-naphthoate from chorismate: step 3/7. The protein operates within quinol/quinone metabolism; menaquinone biosynthesis. Catalyzes a proton abstraction reaction that results in 2,5-elimination of pyruvate from 2-succinyl-5-enolpyruvyl-6-hydroxy-3-cyclohexene-1-carboxylate (SEPHCHC) and the formation of 2-succinyl-6-hydroxy-2,4-cyclohexadiene-1-carboxylate (SHCHC). This Escherichia coli (strain ATCC 8739 / DSM 1576 / NBRC 3972 / NCIMB 8545 / WDCM 00012 / Crooks) protein is 2-succinyl-6-hydroxy-2,4-cyclohexadiene-1-carboxylate synthase.